The primary structure comprises 446 residues: Protein adenylyltransferase FICD (446 aa).

The Cytoplasmic segment spans residues 1 to 18; it reads MAVTECEWASLGSRIGLR. Residues 19–39 traverse the membrane as a helical; Signal-anchor for type II membrane protein segment; that stretch reads AALVLLSGSLLVVLFPLSGLE. The Lumenal segment spans residues 40–446; it reads HQYRTALNIL…ECKQTITIKT (407 aa). 2 TPR repeats span residues 94 to 127 and 128 to 161; these read AKAALNQALEMKRQGKKEKAHKLLHHALKMDPDH and VDALNELGILLEEEKDIIQADYLYSKALTISPHN. Residues 218–223 carry the Inhibitory (S/T)XXXE(G/N) motif motif; the sequence is TVAIEG. An ATP-binding site is contributed by Glu222. Asn263 is a glycosylation site (N-linked (GlcNAc...) asparagine). One can recognise a Fido domain in the interval 273–408; sequence VTIDNILEIH…VRPFIRFIAK (136 aa). Residue 304–307 coordinates ATP; the sequence is VGHH. His351 is a catalytic residue. Residues 355–362, 387–388, and Asn395 each bind ATP; these read DGNGRTSR and YY.

The protein belongs to the fic family. Homodimer. Requires Mg(2+) as cofactor. It depends on Mn(2+) as a cofactor.

Its subcellular location is the endoplasmic reticulum membrane. The enzyme catalyses L-tyrosyl-[protein] + ATP = O-(5'-adenylyl)-L-tyrosyl-[protein] + diphosphate. It carries out the reaction 3-O-(5'-adenylyl)-L-threonyl-[protein] + H2O = L-threonyl-[protein] + AMP + H(+). It catalyses the reaction L-threonyl-[protein] + ATP = 3-O-(5'-adenylyl)-L-threonyl-[protein] + diphosphate. With respect to regulation, the side chain of Glu-222 determines which of the two opposing activities (AMPylase or de-AMPylase) will take place. In response to endoplasmic reticulum stress, mediates de-AMPylase activity. Adenylyltransferase activity is inhibited by the inhibitory helix present at the N-terminus: Glu-222 binds ATP and competes with ATP-binding at Arg-362, thereby preventing adenylyltransferase activity. In unstressed cells, disengagement of Glu-222 promotes adenylyltransferase activity. Activation dissociates ATP-binding from Glu-222, allowing ordered binding of the entire ATP moiety with the alpha-phosphate in an orientation that is productive for accepting an incoming target hydroxyl side chain. In terms of biological role, protein that can both mediate the addition of adenosine 5'-monophosphate (AMP) to specific residues of target proteins (AMPylation), and the removal of the same modification from target proteins (de-AMPylation), depending on the context. The side chain of Glu-222 determines which of the two opposing activities (AMPylase or de-AMPylase) will take place. Acts as a key regulator of the ERN1/IRE1-mediated unfolded protein response (UPR) by mediating AMPylation or de-AMPylation of HSPA5/BiP. In unstressed cells, acts as an adenylyltransferase by mediating AMPylation of HSPA5/BiP at 'Thr-518', thereby inactivating it. In response to endoplasmic reticulum stress, acts as a phosphodiesterase by mediating removal of ATP (de-AMPylation) from HSPA5/BiP at 'Thr-518', leading to restore HSPA5/BiP activity. This chain is Protein adenylyltransferase FICD, found in Xenopus tropicalis (Western clawed frog).